The sequence spans 433 residues: MLNFISKPVGCLKGEITVPGDKSISHRSIIFGAIAIGTSVIDGFLDGEDCIATLKAFQSMGVRIEGPDKQRVIIHGVGKYGLKQPQNIIDCGNSGTSMRLLAGLLAAQQFDSQLTGDESLLKRPMLRISRPLSQMGADVTTQDGKPPIVIKGGKKLNGIHYVMPEASAQVKSCLLLAGMYAEGQTKITENAVSRDHTERMLRTFSYPVQIQDGAIIIDCNGECHGTRLNIPGDISSAAFFIVAASITPGSDVLIRNVGINPTRTGIIHILTEMGADIRVLNQRAYGEEPVADLHIRYSQLKGIDIPASMVPLAIDEFPVIFIAAACAQGKTTLHGAKELRLKESDRIGAMVDGLNQLGVHAEGFDDGILIEGGSIQGGEVNSRGDHRIAMSFAIAGAVASAPVTIKNCANVATSFPSFVTTANMLHFQIEEYS.

3-phosphoshikimate is bound by residues Lys-22, Ser-23, and Arg-27. Lys-22 is a binding site for phosphoenolpyruvate. Positions 95 and 123 each coordinate phosphoenolpyruvate. 4 residues coordinate 3-phosphoshikimate: Ser-167, Gln-169, Asp-315, and Lys-342. Gln-169 is a binding site for phosphoenolpyruvate. Asp-315 serves as the catalytic Proton acceptor. Phosphoenolpyruvate-binding residues include Arg-346 and Arg-387.

This sequence belongs to the EPSP synthase family. Monomer.

It localises to the cytoplasm. The catalysed reaction is 3-phosphoshikimate + phosphoenolpyruvate = 5-O-(1-carboxyvinyl)-3-phosphoshikimate + phosphate. It participates in metabolic intermediate biosynthesis; chorismate biosynthesis; chorismate from D-erythrose 4-phosphate and phosphoenolpyruvate: step 6/7. Functionally, catalyzes the transfer of the enolpyruvyl moiety of phosphoenolpyruvate (PEP) to the 5-hydroxyl of shikimate-3-phosphate (S3P) to produce enolpyruvyl shikimate-3-phosphate and inorganic phosphate. This chain is 3-phosphoshikimate 1-carboxyvinyltransferase, found in Legionella pneumophila subsp. pneumophila (strain Philadelphia 1 / ATCC 33152 / DSM 7513).